Here is a 238-residue protein sequence, read N- to C-terminus: Cysteine-rich venom protein pseudechetoxin-like (238 aa).

The first 19 residues, 1 to 19, serve as a signal peptide directing secretion; the sequence is MIAFIVLLSLAAVLQQSSG. A propeptide spanning residues 20 to 28 is cleaved from the precursor; the sequence is TVDFASESS. Positions 38 to 164 constitute an SCP domain; the sequence is VDKHNALRRS…STKYLYVCQY (127 aa). Intrachain disulfides connect Cys75–Cys153, Cys92–Cys165, Cys148–Cys162, Cys184–Cys191, Cys187–Cys196, Cys200–Cys233, Cys209–Cys227, and Cys218–Cys231. Residues 200–233 form the ShKT domain; sequence CKYEDDFSNCKALAKNSKCQTEWIKSKCPAACFC.

It belongs to the CRISP family. In terms of tissue distribution, expressed by the venom gland.

The protein localises to the secreted. In terms of biological role, blocks olfactory (CNGA2) and retinal (CNGA1) CNG channel currents. Does not affect neither depolarization- nor caffeine-induced contraction of smooth muscle. This chain is Cysteine-rich venom protein pseudechetoxin-like, found in Notechis scutatus scutatus (Mainland tiger snake).